Here is a 229-residue protein sequence, read N- to C-terminus: Cytochrome c oxidase subunit 2 (229 aa).

The Mitochondrial intermembrane segment spans residues 1–14 (MANPSQFGFQDASS). Residues 15–45 (PIMEELVEFHDHALMVALAICSLVLYLLALM) traverse the membrane as a helical segment. At 46–58 (LVEKLSSNTVDAQ) the chain is on the mitochondrial matrix side. The chain crosses the membrane as a helical span at residues 59 to 86 (EVELIWTILPAIVLILLALPSLQILYMM). The Mitochondrial intermembrane segment spans residues 87–229 (DEIDEPDLTL…SWSSLLSTDS (143 aa)). Cu cation-binding residues include His160, Cys195, Glu197, Cys199, His203, and Met206. Glu197 is a binding site for Mg(2+).

This sequence belongs to the cytochrome c oxidase subunit 2 family. In terms of assembly, component of the cytochrome c oxidase (complex IV, CIV), a multisubunit enzyme composed of 14 subunits. The complex is composed of a catalytic core of 3 subunits MT-CO1, MT-CO2 and MT-CO3, encoded in the mitochondrial DNA, and 11 supernumerary subunits COX4I, COX5A, COX5B, COX6A, COX6B, COX6C, COX7A, COX7B, COX7C, COX8 and NDUFA4, which are encoded in the nuclear genome. The complex exists as a monomer or a dimer and forms supercomplexes (SCs) in the inner mitochondrial membrane with NADH-ubiquinone oxidoreductase (complex I, CI) and ubiquinol-cytochrome c oxidoreductase (cytochrome b-c1 complex, complex III, CIII), resulting in different assemblies (supercomplex SCI(1)III(2)IV(1) and megacomplex MCI(2)III(2)IV(2)). Found in a complex with TMEM177, COA6, COX18, COX20, SCO1 and SCO2. Interacts with TMEM177 in a COX20-dependent manner. Interacts with COX20. Interacts with COX16. The cofactor is Cu cation.

It localises to the mitochondrion inner membrane. It carries out the reaction 4 Fe(II)-[cytochrome c] + O2 + 8 H(+)(in) = 4 Fe(III)-[cytochrome c] + 2 H2O + 4 H(+)(out). In terms of biological role, component of the cytochrome c oxidase, the last enzyme in the mitochondrial electron transport chain which drives oxidative phosphorylation. The respiratory chain contains 3 multisubunit complexes succinate dehydrogenase (complex II, CII), ubiquinol-cytochrome c oxidoreductase (cytochrome b-c1 complex, complex III, CIII) and cytochrome c oxidase (complex IV, CIV), that cooperate to transfer electrons derived from NADH and succinate to molecular oxygen, creating an electrochemical gradient over the inner membrane that drives transmembrane transport and the ATP synthase. Cytochrome c oxidase is the component of the respiratory chain that catalyzes the reduction of oxygen to water. Electrons originating from reduced cytochrome c in the intermembrane space (IMS) are transferred via the dinuclear copper A center (CU(A)) of subunit 2 and heme A of subunit 1 to the active site in subunit 1, a binuclear center (BNC) formed by heme A3 and copper B (CU(B)). The BNC reduces molecular oxygen to 2 water molecules using 4 electrons from cytochrome c in the IMS and 4 protons from the mitochondrial matrix. This is Cytochrome c oxidase subunit 2 (MT-CO2) from Struthio camelus (Common ostrich).